The sequence spans 945 residues: Glutamyl aminopeptidase (945 aa).

The Cytoplasmic segment spans residues 1-18; it reads MNFAEEEPSKKYCIKGKH. The helical; Signal-anchor for type II membrane protein transmembrane segment at 19-39 threads the bilayer; that stretch reads VAIICGVVVAVGLIVGLSVGL. The Extracellular segment spans residues 40–945; that stretch reads TRSCEQDTTP…SIREWFASLP (906 aa). Residues 43–77 form a disordered region; that stretch reads CEQDTTPAPSQPPPEASTALPPQDQNVCPDSEDES. N-linked (GlcNAc...) asparagine glycosylation is found at N116 and N189. E215 lines the substrate pocket. Residue N316 is glycosylated (N-linked (GlcNAc...) asparagine). 349–353 lines the substrate pocket; sequence GAMEN. Zn(2+) is bound at residue H385. The Proton acceptor role is filled by E386. Residues H389 and E408 each contribute to the Zn(2+) site. N-linked (GlcNAc...) asparagine glycans are attached at residues N546, N601, N637, N669, N754, and N792. R878 is a substrate binding site.

The protein belongs to the peptidase M1 family. As to quaternary structure, homodimer; disulfide-linked. It depends on Zn(2+) as a cofactor. Early B-lineage cells and certain stromal cell of hemopoietic tissues. Also expressed by capillary endothelial cells, placenta, and epithelial cells of the intestine and proximal renal tubules.

It localises to the cell membrane. The catalysed reaction is Release of N-terminal glutamate (and to a lesser extent aspartate) from a peptide.. With respect to regulation, substrate specificity is modulated by calcium which enhances the enzymatic activity for cleavage of acidic residues while reducing its activity with basic residues. Inhibited by aminopeptidase inhibitors amastatin and bestatin. Regulates central hypertension through its calcium-modulated preference to cleave N-terminal acidic residues from peptides such as angiotensin II. This is Glutamyl aminopeptidase (Enpep) from Mus musculus (Mouse).